A 145-amino-acid chain; its full sequence is D-aminoacyl-tRNA deacylase (145 aa).

The Gly-cisPro motif, important for rejection of L-amino acids signature appears at 137–138 (GP).

Belongs to the DTD family. In terms of assembly, homodimer.

Its subcellular location is the cytoplasm. It catalyses the reaction glycyl-tRNA(Ala) + H2O = tRNA(Ala) + glycine + H(+). The catalysed reaction is a D-aminoacyl-tRNA + H2O = a tRNA + a D-alpha-amino acid + H(+). An aminoacyl-tRNA editing enzyme that deacylates mischarged D-aminoacyl-tRNAs. Also deacylates mischarged glycyl-tRNA(Ala), protecting cells against glycine mischarging by AlaRS. Acts via tRNA-based rather than protein-based catalysis; rejects L-amino acids rather than detecting D-amino acids in the active site. By recycling D-aminoacyl-tRNA to D-amino acids and free tRNA molecules, this enzyme counteracts the toxicity associated with the formation of D-aminoacyl-tRNA entities in vivo and helps enforce protein L-homochirality. This is D-aminoacyl-tRNA deacylase from Pseudomonas fluorescens (strain Pf0-1).